A 327-amino-acid polypeptide reads, in one-letter code: Aquaporin-1 (327 aa).

The interval 1 to 34 is disordered; it reads MSSNDSNDTDKQHTRLDPTGVDDAYIPPEQPETK. Over 1–48 the chain is Cytoplasmic; that stretch reads MSSNDSNDTDKQHTRLDPTGVDDAYIPPEQPETKHHRFKISKDTLRNH. Residues 49–69 form a helical membrane-spanning segment; sequence FIAAAGEFCGTFMFLWCAYVI. At 70–91 the chain is on the extracellular side; sequence CNVANHDVALVAAPDGSHPGQL. The chain crosses the membrane as a helical span at residues 92–112; it reads IMIAIGFGFSVMFSIWCFAGV. Topologically, residues 113 to 136 are cytoplasmic; the sequence is SGGALNPAVSLSLCLARAVSPTRC. The NPA 1 motif lies at 118 to 120; it reads NPA. Residues 137–157 traverse the membrane as a helical segment; sequence VVMWVSQIVAGMAAGGAASAM. The Extracellular segment spans residues 158–176; that stretch reads TPGEVLFANSLGLGCSRTR. Residues 177–197 form a helical membrane-spanning segment; sequence GLFLEMFGTAILCLTVLMTAV. Residues 198 to 203 lie on the Cytoplasmic side of the membrane; the sequence is EKRETN. A helical transmembrane segment spans residues 204 to 224; it reads FMAALPIGISLFIAHVALTAY. The Extracellular segment spans residues 225–248; sequence TGTGVNPARSLGAAVAARYFPHYH. The NPA 2 signature appears at 230-232; it reads NPA. A helical membrane pass occupies residues 249 to 269; that stretch reads WIYWIGPLLGSILAWSVWQLL. Over 270–327 the chain is Cytoplasmic; the sequence is QILDYTTYVTAEKAASTKEKAQKKVKPAVPLLWLKSNFSLLFFISRSLALNVIIFGKN.

The protein belongs to the MIP/aquaporin (TC 1.A.8) family.

Its subcellular location is the endoplasmic reticulum membrane. The protein resides in the cell membrane. In terms of biological role, water channel required to facilitate the transport of water across membranes. Involved in sporulation, freeze tolerance and osmotolerance. Is non-functional in most laboratory strains. The polypeptide is Aquaporin-1 (AQY1) (Saccharomyces cerevisiae (strain Lalvin EC1118 / Prise de mousse) (Baker's yeast)).